We begin with the raw amino-acid sequence, 1489 residues long: Ras GTPase-activating-like protein rng2 (1489 aa).

The Calponin-homology (CH) domain occupies 41–147 (LCRVDEAKKW…YCIHALSYFL (107 aa)). IQ domains are found at residues 359–388 (QSSSVVLLQAVIRGYISRNTYRIRKKAYDE), 389–418 (LVNWVTSIQSISRAYLIRAQYRKVVLQEEA), 418–449 (ATKSIQTLQSIIRGGFYRRKYHSLIERLDLFT), 535–564 (ELDNFIKLQNLSRGFMIRRAFKEKLEKLKA), 565–594 (STSSFIALQAIVRAFLLRKNLESIYDSFQK), and 655–684 (FIPEIVLLQSLIRGYLSRNKFSRKLQNFHK). Residues 734–770 (EEEVLLEKMRKEIVQQVRDNEEIEVHINELDVKIALL) adopt a coiled-coil conformation. The region spanning 870–1110 (VLLLRFISQV…QDTMLMLERL (241 aa)) is the Ras-GAP domain. Residues 1330 to 1364 (QSLLNLREKRAFLDSQLKSYNEYIEQAMETLQSKK) are a coiled coil.

In terms of assembly, interacts with calmodulin cam1.

It is found in the cytoplasm. Its subcellular location is the cytoskeleton. The protein localises to the nucleus envelope. It localises to the microtubule organizing center. The protein resides in the spindle pole body. Component of the contractile F-actin ring; required for its construction following assembly of F-actin at the division site. The sequence is that of Ras GTPase-activating-like protein rng2 from Schizosaccharomyces pombe (strain 972 / ATCC 24843) (Fission yeast).